The chain runs to 164 residues: CDP-archaeol synthase (164 aa).

Helical transmembrane passes span Leu3–Ala23, Tyr51–Leu71, Leu77–Ile97, and Leu122–Ile142.

The protein belongs to the CDP-archaeol synthase family. The cofactor is Mg(2+).

Its subcellular location is the cell membrane. It catalyses the reaction 2,3-bis-O-(geranylgeranyl)-sn-glycerol 1-phosphate + CTP + H(+) = CDP-2,3-bis-O-(geranylgeranyl)-sn-glycerol + diphosphate. It functions in the pathway membrane lipid metabolism; glycerophospholipid metabolism. Catalyzes the formation of CDP-2,3-bis-(O-geranylgeranyl)-sn-glycerol (CDP-archaeol) from 2,3-bis-(O-geranylgeranyl)-sn-glycerol 1-phosphate (DGGGP) and CTP. This reaction is the third ether-bond-formation step in the biosynthesis of archaeal membrane lipids. In Pyrobaculum islandicum (strain DSM 4184 / JCM 9189 / GEO3), this protein is CDP-archaeol synthase.